The primary structure comprises 215 residues: Ribosomal RNA small subunit methyltransferase G (215 aa).

S-adenosyl-L-methionine is bound by residues Gly78, Leu83, 128–129 (AE), and Arg146.

The protein belongs to the methyltransferase superfamily. RNA methyltransferase RsmG family.

Its subcellular location is the cytoplasm. The catalysed reaction is guanosine(527) in 16S rRNA + S-adenosyl-L-methionine = N(7)-methylguanosine(527) in 16S rRNA + S-adenosyl-L-homocysteine. In terms of biological role, specifically methylates the N7 position of guanine in position 527 of 16S rRNA. The chain is Ribosomal RNA small subunit methyltransferase G from Anaeromyxobacter dehalogenans (strain 2CP-C).